A 199-amino-acid polypeptide reads, in one-letter code: Holliday junction branch migration complex subunit RuvA (199 aa).

The segment at 1-64 (MIALLTGKLA…EDAINLYGFR (64 aa)) is domain I. The interval 65–143 (TMEEKEMFQL…KLGHGPLQQD (79 aa)) is domain II. The interval 144–148 (VAPAD) is flexible linker. The segment at 149-199 (AHNDMRDDVVSALVNLGYKEAVVQKTVDEIGVAADATVESLLKQALKKLMK) is domain III.

This sequence belongs to the RuvA family. Homotetramer. Forms an RuvA(8)-RuvB(12)-Holliday junction (HJ) complex. HJ DNA is sandwiched between 2 RuvA tetramers; dsDNA enters through RuvA and exits via RuvB. An RuvB hexamer assembles on each DNA strand where it exits the tetramer. Each RuvB hexamer is contacted by two RuvA subunits (via domain III) on 2 adjacent RuvB subunits; this complex drives branch migration. In the full resolvosome a probable DNA-RuvA(4)-RuvB(12)-RuvC(2) complex forms which resolves the HJ.

The protein resides in the cytoplasm. The RuvA-RuvB-RuvC complex processes Holliday junction (HJ) DNA during genetic recombination and DNA repair, while the RuvA-RuvB complex plays an important role in the rescue of blocked DNA replication forks via replication fork reversal (RFR). RuvA specifically binds to HJ cruciform DNA, conferring on it an open structure. The RuvB hexamer acts as an ATP-dependent pump, pulling dsDNA into and through the RuvAB complex. HJ branch migration allows RuvC to scan DNA until it finds its consensus sequence, where it cleaves and resolves the cruciform DNA. The polypeptide is Holliday junction branch migration complex subunit RuvA (Geotalea daltonii (strain DSM 22248 / JCM 15807 / FRC-32) (Geobacter daltonii)).